The chain runs to 986 residues: MATPRAQKFNPIAFTPGPVTLITTIVYLALLIPILVISLVVPPAPETSPEGVNLTEAWRDLQHLTGGFHPYNSRRNDDVHQWLLRRIDSILRPTVEAGERPSANNDIPDVFVFDDNQSNLTYSNGGVGKAAIVGVYFEGTNIIVYIRGTEDDPENWWERSNGKPKGKGGVLVNAHYDSVSTGYGATDNGMGVVSLLQLLKYFTTPGNKPRKGLVLLFNNGEEDYLNGAHVFSQHPLSNFTHTFLNLEGAGAGGRAALFRTTDTEVTRFYQNAKHPFGSVLAADGFKMGLLRSQTDYVVFNGILGLRGLDLAFIAPRSRYHTDQDDARHTSVDSLWHMLSAAIGTTEGLVSYTGTDFDGKSQGLDKVNSGTGTLGVWFDMFGSAFAVFRLHTLFALSVTLLIVAPLVIFITAIVLSKTDRMYLFSMSKSLGGTDERVSLRGLRGLFRTPIILAVATVIPIGLAYLLEKVNPYIVHSSQFSVWSMMISVWIFLAWFLACAADFFRPSALHRAYSYTWIFIATWVMLVINTVYANQKGIAAGYFVFFYFSGSFLATWVSYLELFALPRKGDFARQAIMHSGRPPSSLRSRLLTPSADELPSDTGPHAEYPGDADETDPTESTSLLRGQRTTFANYRTGGTDGVVEGTDEGPSFKHEQSWSWTLPRWTWVLQLLLLAPIVLILVGQLALFLTTSMSQVGSDGVSTFIVYLACAVFTTLLFAPLFPFIHRFTYHIPTFLFLVFVGTLIYNLVAFPFSPANRLKMFFIQEVNLDDGSNTVSLSGIQPYLTDAINSIPSAAGQNITCDQSAFGKLEKCSWAGLPPRVLGQDHDRDTGIVSSDWMSYNITKTVGENKARIEISGRNTRACKLKFDKPVADFQVSGSAVDHRMPHTSGQGVAEIRLWSRTWDRTWVVDICWHDSHDKPEDDDGDDEKQDAPRNGLSGKVICLWSDSNQSDVIPALDELRLYTPNWVAISKSADGLVEASHGITIQ.

At Met1–Thr20 the chain is on the cytoplasmic side. The chain crosses the membrane as a helical span at residues Leu21 to Val41. The Vacuolar portion of the chain corresponds to Pro42–Leu392. 3 N-linked (GlcNAc...) asparagine glycosylation sites follow: Asn53, Asn116, and Asn119. Positions 175 and 187 each coordinate Zn(2+). Glu221 serves as the catalytic Proton acceptor. Glu222 is a binding site for Zn(2+). The N-linked (GlcNAc...) asparagine glycan is linked to Asn238. The Zn(2+) site is built by Glu247 and His320. Residues Phe393–Val413 form a helical membrane-spanning segment. Topologically, residues Leu414–Thr447 are cytoplasmic. Residues Pro448–Val468 form a helical membrane-spanning segment. Residues Asn469 to Gln477 are Vacuolar-facing. The helical transmembrane segment at Phe478 to Ala498 threads the bilayer. Over Ala499–Arg509 the chain is Cytoplasmic. The chain crosses the membrane as a helical span at residues Ala510–Tyr530. The Vacuolar portion of the chain corresponds to Ala531–Lys534. The helical transmembrane segment at Gly535–Val555 threads the bilayer. Residues Ser556 to Trp665 are Cytoplasmic-facing. The tract at residues Glu595–Ser620 is disordered. The chain crosses the membrane as a helical span at residues Val666 to Phe686. Topologically, residues Leu687–Phe702 are vacuolar. Residues Ile703–Ile723 form a helical membrane-spanning segment. The Cytoplasmic segment spans residues His724–His729. The helical transmembrane segment at Ile730–Pro750 threads the bilayer. Residues Phe751–Gln986 lie on the Vacuolar side of the membrane. N-linked (GlcNAc...) asparagine glycosylation is found at Asn797, Asn840, and Asn948.

It belongs to the peptidase M28 family. It depends on Zn(2+) as a cofactor.

The protein localises to the vacuole membrane. Its function is as follows. May be involved in vacuolar sorting and osmoregulation. The sequence is that of Vacuolar membrane protease from Blastomyces gilchristii (strain SLH14081) (Blastomyces dermatitidis).